The chain runs to 101 residues: Eukaryotic translation initiation factor 4E-binding protein 3 (101 aa).

The interval 1–28 is disordered; sequence MSSSTSCPIPGCRDQLPDGYSTTPGGTL. The YXXXXLphi motif motif lies at 40–46; the sequence is YDRKFLL. The TOS motif signature appears at 97–101; that stretch reads FEMDM.

It belongs to the eIF4E-binding protein family. Interacts with EIF4E. Interacts with RPA2 (via N-terminus); the interaction enhances EIF4EBP3-mediated inhibition of EIF4E-mediated mRNA nuclear export. Post-translationally, phosphorylated.

The protein resides in the cytoplasm. It localises to the nucleus. Functionally, repressor of translation initiation that regulates EIF4E activity by preventing its assembly into the eIF4F complex: the hypophosphorylated form competes with EIF4G1/EIF4G3 and strongly binds to EIF4E, leading to repression of translation. In contrast, the hyperphosphorylated form dissociates from EIF4E, allowing interaction between EIF4G1/EIF4G3 and EIF4E, leading to initiation of translation. Inhibits EIF4E-mediated mRNA nuclear export. This chain is Eukaryotic translation initiation factor 4E-binding protein 3 (Eif4ebp3), found in Mus musculus (Mouse).